The sequence spans 105 residues: Small ribosomal subunit protein uS10 (105 aa).

It belongs to the universal ribosomal protein uS10 family. Part of the 30S ribosomal subunit.

Functionally, involved in the binding of tRNA to the ribosomes. The polypeptide is Small ribosomal subunit protein uS10 (Acaryochloris marina (strain MBIC 11017)).